Reading from the N-terminus, the 443-residue chain is Probable glycine dehydrogenase (decarboxylating) subunit 1 (443 aa).

The protein belongs to the GcvP family. N-terminal subunit subfamily. As to quaternary structure, the glycine cleavage system is composed of four proteins: P, T, L and H. In this organism, the P 'protein' is a heterodimer of two subunits.

It carries out the reaction N(6)-[(R)-lipoyl]-L-lysyl-[glycine-cleavage complex H protein] + glycine + H(+) = N(6)-[(R)-S(8)-aminomethyldihydrolipoyl]-L-lysyl-[glycine-cleavage complex H protein] + CO2. Its function is as follows. The glycine cleavage system catalyzes the degradation of glycine. The P protein binds the alpha-amino group of glycine through its pyridoxal phosphate cofactor; CO(2) is released and the remaining methylamine moiety is then transferred to the lipoamide cofactor of the H protein. This is Probable glycine dehydrogenase (decarboxylating) subunit 1 from Solidesulfovibrio magneticus (strain ATCC 700980 / DSM 13731 / RS-1) (Desulfovibrio magneticus).